We begin with the raw amino-acid sequence, 182 residues long: Large ribosomal subunit protein uL6 (182 aa).

This sequence belongs to the universal ribosomal protein uL6 family. Part of the 50S ribosomal subunit.

Functionally, this protein binds to the 23S rRNA, and is important in its secondary structure. It is located near the subunit interface in the base of the L7/L12 stalk, and near the tRNA binding site of the peptidyltransferase center. The protein is Large ribosomal subunit protein uL6 of Dehalococcoides mccartyi (strain ATCC BAA-2266 / KCTC 15142 / 195) (Dehalococcoides ethenogenes (strain 195)).